The following is a 382-amino-acid chain: RIB43A-like with coiled-coils protein 2 (382 aa).

Residues 222-255 (NKSQAIESVERKKQEKKQEQEDNLAEITNLLRGD) are a coiled coil.

It belongs to the RIB43A family. As to quaternary structure, microtubule inner protein component of sperm flagellar doublet microtubules. Expressed in airway epithelial cells.

Its subcellular location is the cytoplasm. It localises to the cytoskeleton. The protein resides in the cilium axoneme. The protein localises to the flagellum axoneme. Functionally, microtubule inner protein (MIP) part of the dynein-decorated doublet microtubules (DMTs) in cilia axoneme, which is required for motile cilia beating. This chain is RIB43A-like with coiled-coils protein 2, found in Homo sapiens (Human).